A 420-amino-acid chain; its full sequence is Histidine--tRNA ligase (420 aa).

The protein belongs to the class-II aminoacyl-tRNA synthetase family. In terms of assembly, homodimer.

The protein localises to the cytoplasm. The catalysed reaction is tRNA(His) + L-histidine + ATP = L-histidyl-tRNA(His) + AMP + diphosphate + H(+). The protein is Histidine--tRNA ligase (hisS) of Thermotoga maritima (strain ATCC 43589 / DSM 3109 / JCM 10099 / NBRC 100826 / MSB8).